Reading from the N-terminus, the 367-residue chain is Viral cathepsin (367 aa).

The N-terminal stretch at 1–25 (MRKYHSNIMHKIITFVSLLWTFVVC) is a signal peptide. Positions 26–156 (DEISLHTSSS…IVKGAPDIRL (131 aa)) are cleaved as a propeptide — activation peptide. N-linked (GlcNAc...) asparagine; by host glycosylation is found at N103 and N135. Intrachain disulfides connect C177–C218, C211–C251, and C306–C354. The active site involves C180. Catalysis depends on residues H313 and N333.

It belongs to the peptidase C1 family. In terms of processing, synthesized as an inactive proenzyme and activated by proteolytic removal of the inhibitory propeptide.

The enzyme catalyses Endopeptidase of broad specificity, hydrolyzing substrates of both cathepsin L and cathepsin B.. Cysteine protease that plays an essential role in host liquefaction to facilitate horizontal transmission of the virus. May participate in the degradation of foreign protein expressed by the baculovirus system. The sequence is that of Viral cathepsin (VCATH) from Lepidoptera (butterflies and moths).